A 386-amino-acid chain; its full sequence is Phosphoglycerate kinase (386 aa).

Substrate-binding positions include 21-23, Arg36, 59-62, Arg113, and Arg146; these read DLN and HLGR. ATP-binding positions include Lys197, Glu314, and 340–343; that span reads GGDT.

The protein belongs to the phosphoglycerate kinase family. Monomer.

The protein resides in the cytoplasm. The enzyme catalyses (2R)-3-phosphoglycerate + ATP = (2R)-3-phospho-glyceroyl phosphate + ADP. It participates in carbohydrate degradation; glycolysis; pyruvate from D-glyceraldehyde 3-phosphate: step 2/5. The chain is Phosphoglycerate kinase from Vibrio campbellii (strain ATCC BAA-1116).